Here is a 53-residue protein sequence, read N- to C-terminus: UPF0391 membrane protein azo1750 (53 aa).

Helical transmembrane passes span 6–26 (VIFL…IAAG) and 30–50 (IAKI…VLGM).

This sequence belongs to the UPF0391 family.

Its subcellular location is the cell membrane. This Azoarcus sp. (strain BH72) protein is UPF0391 membrane protein azo1750.